Reading from the N-terminus, the 702-residue chain is MPALAVDAAAPVAHAFACDAARFPAPLLGPAAAAAAVAEKPDAAAWSADLSSALYNVDGWGAPYFFVNDDGDVAVRPHGAATLPGQEIDLAKVVAKAAGPRSGGGLGLPLPLLVRFPDVLRHRVEALNAAFDYAVRSTGYGGRYQGVYPVKCNQDRHVVEDIVEFGEPFRFGLEAGSKPELLLAMSCLAARGNPDALLICNGYKDDEYVSLALIARTMGLNTVIVLEQEEELDIVVDASRRLGVRPVVGMRAKLRTKHAGHFGSTSGEKGKFGLNAAQILSVVAKLKTLGMLDCLQLLHFHIGSQIPTTALLGDGVGEAAQIYCELARLGAAMRVIDVGGGLGIDYDGSHSAQTDMSVAYSLEEYAAAVVAAVGRVCDRKGVAHPIICSESGRALVSHHSVLVFEAFSASAPGRIDPATGYLLDELTDDCHADYRNLMAAAVRGDFDTCALYADQLKRRCADQFKDGVLGLEHLAAVDSLCEIVARGMGAAEPPRTYHINLSVFTSLPDMWAIGQMFPIIPIQRLGERPAVDGVLSDLTCDSDGKVDHFIGGRHSLPLHELPVHGTRGYYLGMFLGGAYQEALGGLHNLFGGPSVVRVSQSDGPHCFAVTRAAAGPSCADVLRSMQHEPEVMFEVLKQRTDGATAAALARAFGAMPYLSFDPEAAAMASGESSGMSSDSEGSAAGAAEEDDDEWEFMRGLTV.

Position 151 is an N6-(pyridoxal phosphate)lysine (lysine 151). Substrate is bound at residue 336–346 (IDVGGGLGIDY). Low complexity predominate over residues 668–686 (ASGESSGMSSDSEGSAAGA). The tract at residues 668–702 (ASGESSGMSSDSEGSAAGAAEEDDDEWEFMRGLTV) is disordered.

The protein belongs to the Orn/Lys/Arg decarboxylase class-II family. SpeA subfamily. It depends on pyridoxal 5'-phosphate as a cofactor. Mg(2+) is required as a cofactor. In terms of tissue distribution, expressed in roots, leaves and stems (at protein level).

The catalysed reaction is L-arginine + H(+) = agmatine + CO2. Its pathway is amine and polyamine biosynthesis; agmatine biosynthesis; agmatine from L-arginine: step 1/1. This Oryza sativa subsp. japonica (Rice) protein is Arginine decarboxylase 1 (ADC1).